Reading from the N-terminus, the 559-residue chain is Phosphoinositide 3-phosphatase (559 aa).

The Myotubularin phosphatase domain occupies 120–541 (SWKSFLLENE…SSLRWWSASF (422 aa)). C342 (phosphocysteine intermediate) is an active-site residue.

Belongs to the protein-tyrosine phosphatase family. Non-receptor class myotubularin subfamily.

Its subcellular location is the cytoplasm. The catalysed reaction is a 1,2-diacyl-sn-glycero-3-phospho-(1D-myo-inositol-3-phosphate) + H2O = a 1,2-diacyl-sn-glycero-3-phospho-(1D-myo-inositol) + phosphate. Its function is as follows. Lipid phosphatase which dephosphorylates phosphatidylinositol 3-monophosphate (PI3P). Involved in the control of PI3P-dependent signaling and in the maintenance of endosomal system integrity. The polypeptide is Phosphoinositide 3-phosphatase (Schizosaccharomyces pombe (strain 972 / ATCC 24843) (Fission yeast)).